Reading from the N-terminus, the 247-residue chain is ATP synthase subunit a, chloroplastic (247 aa).

5 helical membrane-spanning segments follow: residues 38 to 58 (QVLI…SIAV), 95 to 115 (VPFI…GALL), 134 to 154 (INTT…AGLS), 199 to 219 (LVVV…VMFL), and 220 to 240 (GLFT…AYIG).

The protein belongs to the ATPase A chain family. In terms of assembly, F-type ATPases have 2 components, CF(1) - the catalytic core - and CF(0) - the membrane proton channel. CF(1) has five subunits: alpha(3), beta(3), gamma(1), delta(1), epsilon(1). CF(0) has four main subunits: a, b, b' and c.

Its subcellular location is the plastid. It is found in the chloroplast thylakoid membrane. Key component of the proton channel; it plays a direct role in the translocation of protons across the membrane. The sequence is that of ATP synthase subunit a, chloroplastic from Oenothera argillicola (Appalachian evening primrose).